Reading from the N-terminus, the 134-residue chain is Translation initiation factor 2 subunit beta (134 aa).

Belongs to the eIF-2-beta/eIF-5 family. Heterotrimer composed of an alpha, a beta and a gamma chain.

Its function is as follows. eIF-2 functions in the early steps of protein synthesis by forming a ternary complex with GTP and initiator tRNA. This chain is Translation initiation factor 2 subunit beta, found in Pyrobaculum calidifontis (strain DSM 21063 / JCM 11548 / VA1).